The chain runs to 514 residues: Cytidine and dCMP deaminase domain-containing protein 1 (514 aa).

Composition is skewed to polar residues over residues 1 to 11 and 18 to 27; these read MKEAGQMQNLE and SVSTQTGSMT. Disordered regions lie at residues 1 to 27 and 55 to 83; these read MKEAGQMQNLESARAGRSVSTQTGSMT and RQKSQKNEEGKHGPLGDNEERTRVSTDKR. Over residues 59–83 the composition is skewed to basic and acidic residues; sequence QKNEEGKHGPLGDNEERTRVSTDKR. Residues 70-168 form the CMP/dCMP-type deaminase 1 domain; sequence GDNEERTRVS…SLLTEASSSE (99 aa). 3 residues coordinate Zn(2+): His-109, Cys-134, and Cys-137. Positions 271 to 283 match the Nuclear export signal motif; sequence NLRQNMKDLILLL. The CMP/dCMP-type deaminase 2 domain occupies 317–482; that stretch reads EIARHCMVQA…LNPSGAYGLE (166 aa). A Zn(2+)-binding site is contributed by His-398. Glu-400 acts as the Proton donor in catalysis. Positions 426 and 429 each coordinate Zn(2+). Residues 480–514 form a disordered region; the sequence is GLEQNEPERRENGVLRPVPQKEEQHQDKKLRLGIH. The segment covering 485–514 has biased composition (basic and acidic residues); sequence EPERRENGVLRPVPQKEEQHQDKKLRLGIH. The Bipartite nuclear localization signal signature appears at 488–510; the sequence is RRENGVLRPVPQKEEQHQDKKLR.

This sequence belongs to the cytidine and deoxycytidylate deaminase family. It depends on Zn(2+) as a cofactor. As to expression, widely expressed. Expressed at high levels in the testis.

The protein resides in the cytoplasm. The protein localises to the nucleus. It carries out the reaction 2'-deoxycytidine + H2O + H(+) = 2'-deoxyuridine + NH4(+). It catalyses the reaction cytidine + H2O + H(+) = uridine + NH4(+). Its function is as follows. Catalyzes the deamination of cytidine and deoxycytidine into uridine and deoxyuridine, respectively. May play an important role in testicular development and spermatogenesis. The polypeptide is Cytidine and dCMP deaminase domain-containing protein 1 (CDADC1) (Homo sapiens (Human)).